The following is a 47-amino-acid chain: Small, acid-soluble spore protein N (47 aa).

A disordered region spans residues 1-47; that stretch reads MSNPRGNPKYFNPNHLGTQPRAAGGNKGKKMQDQSGQHAQVIQTKGE. Positions 33-47 are enriched in polar residues; the sequence is DQSGQHAQVIQTKGE.

This sequence belongs to the SspN family.

It localises to the spore core. This is Small, acid-soluble spore protein N from Geobacillus sp. (strain WCH70).